We begin with the raw amino-acid sequence, 162 residues long: Peptidyl-prolyl cis-trans isomerase (162 aa).

Positions 5 to 161 (FFDVIANGQP…ARIVIDKCGT (157 aa)) constitute a PPIase cyclophilin-type domain.

This sequence belongs to the cyclophilin-type PPIase family. PPIase A subfamily.

It localises to the cytoplasm. It carries out the reaction [protein]-peptidylproline (omega=180) = [protein]-peptidylproline (omega=0). With respect to regulation, binds cyclosporin A (CsA). CsA mediates some of its effects via an inhibitory action on PPIase. Functionally, PPIases accelerate the folding of proteins. It catalyzes the cis-trans isomerization of proline imidic peptide bonds in oligopeptides. The sequence is that of Peptidyl-prolyl cis-trans isomerase (ppi1) from Schizosaccharomyces pombe (strain 972 / ATCC 24843) (Fission yeast).